A 140-amino-acid chain; its full sequence is Endoribonuclease YbeY (140 aa).

Residues His-100, His-104, and His-110 each coordinate Zn(2+).

This sequence belongs to the endoribonuclease YbeY family. The cofactor is Zn(2+).

Its subcellular location is the cytoplasm. In terms of biological role, single strand-specific metallo-endoribonuclease involved in late-stage 70S ribosome quality control and in maturation of the 3' terminus of the 16S rRNA. The chain is Endoribonuclease YbeY from Helicobacter pylori (strain P12).